A 480-amino-acid polypeptide reads, in one-letter code: MKKRIVLNAFDMTCVSHQSAGTWRHPSSQAARYNDLEYWTNMAMELERGCFDCLFIADVVGVYDVYRGSAEMALRDADQVPVNDPFGAISAMAAVTEHVGFGVTAAITFEQPYLLARRLSTLDHLTKGRVAWNVVSSYLNSAALNIGMDQQLAHDERYEMADEYMEVMYKLWEGSWEDDAVKRDKKSGVFTDGSKVHPINHQGKYYKVPGFHICEPSPQRTPVIFQAGASGRGSKFAASNAEGMFILTTSVEQARQITTDIRNQAEAAGRSRDSIKIFMLLTVITGDSDEAAEAKYQEYLSYANPEGMLALYGGWTGIDFAKLDPDEPLQAMENDSLRTTLESLTHGENAKKWTVRDVIRERCIGGLGPVLVGGPQKVADELERWVDEGGVDGFNLAYAVTPGSVTDFIDYIVPELRKRGRAQDSYKPGSLRRKLIGTNDGRVESTHPAAQYRDAYVGKESVADRTQPSPFANAKAPVAE.

FMN contacts are provided by D58, T104, H154, Y158, and S230. The segment at 423–480 (QDSYKPGSLRRKLIGTNDGRVESTHPAAQYRDAYVGKESVADRTQPSPFANAKAPVAE) is disordered.

The protein belongs to the NtaA/SnaA/DszA monooxygenase family. As to quaternary structure, heterodimer of 2 subunits, DmoA and DmoB. FMN serves as cofactor.

It catalyses the reaction dimethyl sulfide + NADH + O2 + H(+) = methanethiol + formaldehyde + NAD(+) + H2O. Its activity is regulated as follows. Inhibited by umbelliferone, 8-anilinonaphthalenesulfonate, a range of metal-chelating agents, and Hg(2+), Cd(2+) and Pb(2+) ions. Functionally, monooxygenase that mediates oxidation of dimethyl sulfide, the first step in dimethyl sulfide degradation pathway. Has much lower activity with diethyl sulfide and other short-chain alkyl methyl sulfides. This is Dimethyl-sulfide monooxygenase (dmoA) from Hyphomicrobium sulfonivorans.